Here is a 617-residue protein sequence, read N- to C-terminus: Vacuolar protein sorting-associated protein 33B (617 aa).

Ala2 bears the N-acetylalanine mark.

Belongs to the STXBP/unc-18/SEC1 family. In terms of assembly, interacts with RAB11A and VIPAS39. Associates with adaptor protein complex 3 (AP-3), clathrin:AP-3 and clathrin:HGS complexes. Post-translationally, phosphorylated on tyrosine residues. As to expression, ubiquitous.

It localises to the late endosome membrane. Its subcellular location is the lysosome membrane. The protein localises to the early endosome. It is found in the cytoplasmic vesicle. The protein resides in the clathrin-coated vesicle. It localises to the recycling endosome. Its function is as follows. May play a role in vesicle-mediated protein trafficking to lysosomal compartments and in membrane docking/fusion reactions of late endosomes/lysosomes. Mediates phagolysosomal fusion in macrophages. Proposed to be involved in endosomal maturation implicating VIPAS39. In epithelial cells, the VPS33B:VIPAS39 complex may play a role in the apical recycling pathway and in the maintenance of the apical-basolateral polarity. Seems to be involved in the sorting of specific cargos from the trans-Golgi network to alpha-granule-destined multivesicular bodies (MVBs) promoting MVBs maturation in megakaryocytes. The chain is Vacuolar protein sorting-associated protein 33B (Vps33b) from Rattus norvegicus (Rat).